The sequence spans 279 residues: Probable endonuclease 4 (279 aa).

Positions 67, 107, 144, 177, 180, 214, 227, 229, and 259 each coordinate Zn(2+).

This sequence belongs to the AP endonuclease 2 family. The cofactor is Zn(2+).

The catalysed reaction is Endonucleolytic cleavage to 5'-phosphooligonucleotide end-products.. Endonuclease IV plays a role in DNA repair. It cleaves phosphodiester bonds at apurinic or apyrimidinic (AP) sites, generating a 3'-hydroxyl group and a 5'-terminal sugar phosphate. The chain is Probable endonuclease 4 from Sulfurihydrogenibium sp. (strain YO3AOP1).